Consider the following 323-residue polypeptide: o-succinylbenzoate synthase (323 aa).

Catalysis depends on lysine 134, which acts as the Proton donor. Mg(2+) contacts are provided by aspartate 162, glutamate 191, and aspartate 214. The active-site Proton acceptor is lysine 236.

The protein belongs to the mandelate racemase/muconate lactonizing enzyme family. MenC type 1 subfamily. A divalent metal cation serves as cofactor.

It catalyses the reaction (1R,6R)-6-hydroxy-2-succinyl-cyclohexa-2,4-diene-1-carboxylate = 2-succinylbenzoate + H2O. The protein operates within quinol/quinone metabolism; 1,4-dihydroxy-2-naphthoate biosynthesis; 1,4-dihydroxy-2-naphthoate from chorismate: step 4/7. It functions in the pathway quinol/quinone metabolism; menaquinone biosynthesis. Converts 2-succinyl-6-hydroxy-2,4-cyclohexadiene-1-carboxylate (SHCHC) to 2-succinylbenzoate (OSB). The polypeptide is o-succinylbenzoate synthase (Pectobacterium atrosepticum (strain SCRI 1043 / ATCC BAA-672) (Erwinia carotovora subsp. atroseptica)).